An 880-amino-acid polypeptide reads, in one-letter code: MTSVEPNVYDPQQVESAAQQYWDATRAFEVDEASDKPKYYCLSMLPYPSGALHMGHVRNYTIGDVISRYKRMTGHNVLQPMGWDAFGLPAENAAIKNKTAPAAWTYKNIDHMRTQLKSLGYAIDWSREFATCRPDYYVHEQRMFTRLMRKGLAYRRNAVVNWDPVDQTVLANEQVIDGRGWRSGALVEKREIPQWFLRITDYAQELLDGLDELDGWPESVKTMQRNWIGRSEGLEIQFDVRDVDGGVLDPLRVFTTRPDTVMGVTFVSIAAEHPLALHAAKNNPELAALLADLKQGGVSEAELETQEKRGMDTGLRAIHPVTGEQVPVWVANFVLMGYGTGAVMAVPGHDQRDNEVANKYGLPIVQVIALKDPRSEEERSWDATRWQDWYSDKSRAFELVNSAEFDGLDFQGAFEALAERFERKAQGQRRVNYRLRDWGVSRQRYWGCPIPVIYCAKCGAVPVPEEQLPVVLPEDVAFAGTGSPIKTDPEWRKTTCPECGGAAERETDTFDTFMESSWYYARYTSPGARDAVDKRGNYWLPVDQYIGGIEHAILHLMYFRFYHKLLRDARMVDSNEPARNLLCQGMVIAETYYRPNPDGSRDWINPADVDVQRDERGRITGATLIADGQPVVVGGTEKMSKSKNNGVDPQAMVGKYGADTVRLFSMFAAPPEQSLEWNEAGVDGMARFLRRLWAQVQKHAADGAAPALDVAVLDASQKALRRKTHETIGKVGDDYGRRHSFNTAIAAVMELMNALAKFDDGSDQGRAVRQEALQAIVLLLNPITPHASHTLWQVLGHGETLLEDQPFPQADAAALVRDALTLAVQVNGKLRGTIEVAADAPREQVEALALAEPNAAKFMEGLTVRKIIIVPGKIVNIVVA.

Residues 46-56 (PYPSGALHMGH) carry the 'HIGH' region motif. Residues 638–642 (KMSKS) carry the 'KMSKS' region motif. Lys641 lines the ATP pocket.

Belongs to the class-I aminoacyl-tRNA synthetase family.

The protein localises to the cytoplasm. The catalysed reaction is tRNA(Leu) + L-leucine + ATP = L-leucyl-tRNA(Leu) + AMP + diphosphate. The polypeptide is Leucine--tRNA ligase (Stenotrophomonas maltophilia (strain R551-3)).